A 166-amino-acid polypeptide reads, in one-letter code: uncharacterized protein (166 aa).

The protein to C.perfringens pCP13 PCP12.

This is an uncharacterized protein from Clostridium perfringens.